A 321-amino-acid polypeptide reads, in one-letter code: D-alanine--D-alanine ligase (321 aa).

The ATP-grasp domain occupies 121 to 315 (RSWFLTNNIN…FTNLIEEIIK (195 aa)). Residue 147-199 (PVKRPYVIKPLTQGSSIGVEVIFEEDDFNFADYNFPYGYQVIIEQYIKGRELQ) participates in ATP binding. Mg(2+)-binding residues include Glu268, Glu282, and Asn284.

The protein belongs to the D-alanine--D-alanine ligase family. Requires Mg(2+) as cofactor. Mn(2+) serves as cofactor.

The protein resides in the cytoplasm. The enzyme catalyses 2 D-alanine + ATP = D-alanyl-D-alanine + ADP + phosphate + H(+). Its pathway is cell wall biogenesis; peptidoglycan biosynthesis. Its function is as follows. Cell wall formation. The protein is D-alanine--D-alanine ligase of Rickettsia felis (strain ATCC VR-1525 / URRWXCal2) (Rickettsia azadi).